We begin with the raw amino-acid sequence, 455 residues long: MGNAKSLSGQKMASRFLPEEQAEVDKLFDVLSSSEGGVATGTFSLEAMKSHVKEALPPAMVTRLYNGMQRVKPTDRTLGSCRSVSREQFTAFLSQLLRGSCEEKGLMVMNMISDAEGPTKTRDVQKFTEDLVASVAHVLTHRHELRGWTCRKSEVPPDSMQAMVAQLLSEMKFQDGYKFQGPQCLDQVCDQAMIEEWVFHVPHVGMFLSVVVHRGLCLLGSSFDPSTLVPECLADQGGRFESILDVLSVIYLSSHLAPEHRQRWRLLFSTQLHGQSFSQLCSHITSQGPSLLVLEDRDGYVFGGFASCSWEVKPQFQGDNRCFLFSIAPRMATHLHTGYNNHFMYLNYGQQTMPNGLGMGGQHHYFGLWVAADFGKGHSKAKPACTTYNSPQLSAQEDFLFDKMEVWGLGNLLEEYEGKNKKSVLDSNPEARSLLEISGRARHSEGLREVPRDED.

Glycine 2 carries the N-myristoyl glycine lipid modification. Residues 242 to 410 (SILDVLSVIY…FDKMEVWGLG (169 aa)) enclose the TLDc domain. The segment at 435–455 (LEISGRARHSEGLREVPRDED) is disordered. Basic and acidic residues predominate over residues 442–455 (RHSEGLREVPRDED).

As to quaternary structure, interacts (via C-terminal domain) with MTOR and MLST8; the interaction with MTOR increases upon nutrient stimulation.

It localises to the membrane. It is found in the cytoplasm. The protein resides in the lysosome. Functionally, activates an alternative mTOR signaling through RPS6KB2 activation and EIF4EBP1 repression to regulate cell proliferation and migration. Recruits MTOR at the lysosome, essential for MTOR signaling at the lysosome. The protein is MTOR-associated protein MEAK7 (Meak7) of Mus musculus (Mouse).